A 346-amino-acid polypeptide reads, in one-letter code: Putative agmatine deiminase (346 aa).

Cys-333 serves as the catalytic Amidino-cysteine intermediate.

This sequence belongs to the agmatine deiminase family.

It catalyses the reaction agmatine + H2O = N-carbamoylputrescine + NH4(+). This is Putative agmatine deiminase from Legionella pneumophila (strain Paris).